We begin with the raw amino-acid sequence, 494 residues long: 1-aminocyclopropane-1-carboxylate synthase 2 (494 aa).

N6-(pyridoxal phosphate)lysine is present on K279. Residues 474–494 (NVLNSPHTMSPHSPLVRARTY) form a disordered region. The segment covering 475–484 (VLNSPHTMSP) has biased composition (polar residues).

It belongs to the class-I pyridoxal-phosphate-dependent aminotransferase family. Homodimer. Pyridoxal 5'-phosphate serves as cofactor.

The catalysed reaction is S-adenosyl-L-methionine = 1-aminocyclopropane-1-carboxylate + S-methyl-5'-thioadenosine + H(+). The protein operates within alkene biosynthesis; ethylene biosynthesis via S-adenosyl-L-methionine; ethylene from S-adenosyl-L-methionine: step 1/2. Its function is as follows. Catalyzes the formation of 1-aminocyclopropane-1-carboxylate, a direct precursor of ethylene in higher plants. This Cucurbita pepo (Vegetable marrow) protein is 1-aminocyclopropane-1-carboxylate synthase 2 (ACS2).